The sequence spans 1257 residues: Bifunctional autolysin (1257 aa).

The signal sequence occupies residues 1 to 29 (MAKKFNYKLPSMVALTLVGSAVTAHQVQA). Positions 99–137 (QVNGDTRATQSTTSNNAKPVTKSTNTTAPKTNNNVTSAG) are enriched in polar residues. Disordered stretches follow at residues 99 to 150 (QVNG…NSEN), 173 to 217 (AAPK…KYKP), and 417 to 441 (TQST…PSTG). 2 stretches are compositionally biased toward low complexity: residues 173 to 208 (AAPK…AAAP) and 419 to 440 (STTT…TPST). An N-acetylmuramoyl-L-alanine amidase region spans residues 197-776 (ASAQPRSAAA…AVAQPKTAVK (580 aa)). GW domains lie at 444–518 (TVAA…YNTA), 520–594 (SPVN…DTAK), 613–687 (TVSS…YNNA), 689–763 (SPVN…VPAA), 785–860 (TTQT…VQNL), 862–937 (KEVK…APTA), and 944–1018 (AAKD…KELI). The interval 777–1257 (AYAVTKPQTT…GKYFDIPQYK (481 aa)) is endo-beta-N-acetylglucosaminidase.

In the N-terminal section; belongs to the N-acetylmuramoyl-L-alanine amidase 2 family. This sequence in the C-terminal section; belongs to the glycosyl hydrolase 73 family. Oligomer; forms a ring structure at the cell surface which is important for efficient partitioning of daughter cells after cell division. Post-translationally, undergoes proteolytic processing to generate the two extracellular lytic enzymes, probably at the septal region on the cell surface.

It localises to the secreted. It catalyses the reaction Hydrolyzes the link between N-acetylmuramoyl residues and L-amino acid residues in certain cell-wall glycopeptides.. The enzyme catalyses an N(4)-(oligosaccharide-(1-&gt;3)-[oligosaccharide-(1-&gt;6)]-beta-D-Man-(1-&gt;4)-beta-D-GlcNAc-(1-&gt;4)-alpha-D-GlcNAc)-L-asparaginyl-[protein] + H2O = an oligosaccharide-(1-&gt;3)-[oligosaccharide-(1-&gt;6)]-beta-D-Man-(1-&gt;4)-D-GlcNAc + N(4)-(N-acetyl-beta-D-glucosaminyl)-L-asparaginyl-[protein]. Functionally, endohydrolysis of the di-N-acetylchitobiosyl unit in high-mannose glycopeptides and glycoproteins containing the -[(Man)5(GlcNAc)2]-Asn structure. One N-acetyl-D-glucosamine residue remains attached to the protein; the rest of the oligosaccharide is released intact. Cleaves the peptidoglycan connecting the daughter cells at the end of the cell division cycle, resulting in the separation of the two newly divided cells. Acts as an autolysin in penicillin-induced lysis. The polypeptide is Bifunctional autolysin (atl) (Staphylococcus aureus (strain MRSA252)).